The following is a 3284-amino-acid chain: Location of vulva defective 1 (3284 aa).

The N-terminal stretch at 1–21 (MKKSNFFVLLLLAISAIQIDG) is a signal peptide. Disordered stretches follow at residues 226–326 (ESTS…ITST), 350–505 (TTML…GTNP), 623–702 (VASS…ADST), 827–926 (STSE…ASTE), and 1043–1216 (TTTE…SLAT). 2 stretches are compositionally biased toward low complexity: residues 227 to 326 (STST…ITST) and 350 to 500 (TTML…TTSS). Residues 827 to 913 (STSEVTSTTS…PSDSSSASDS (87 aa)) are compositionally biased toward low complexity. Residues 914-926 (MRTTTVDPDASTE) show a composition bias toward polar residues. Positions 1043–1057 (TTTETPPTTVSSSDD) are enriched in low complexity. The span at 1060–1078 (GKTGGTGATGGTGGTGSGG) shows a compositional bias: gly residues. A compositionally biased stretch (low complexity) spans 1079–1104 (SATTLSTGDAVRSTTSGSGSGQSSTG). Over residues 1105 to 1127 (SGAGGSGTTASGSGSGGSSGTGS) the composition is skewed to gly residues. Residues 1128 to 1138 (DGVNSGKTTAL) are compositionally biased toward polar residues. Low complexity predominate over residues 1163-1192 (GSGSDSNGSSGVSTKSSSGSDTSGSSDSSG). Residues 1197 to 1216 (FSATAQPSTRTTKTRSSLAT) are compositionally biased toward polar residues. In terms of domain architecture, GAIN-B spans 2064–2227 (WNNSLQVEII…SVGAFNPTID (164 aa)). Cysteine 2181 and cysteine 2209 are joined by a disulfide. Residues 2181–2227 (CYFYQKTSDVFNSEGMYPSDGQGMQFVNCSTDHLTMFSVGAFNPTID) are GPS. Residues 2245–2265 (VMIAAVFMLVVYGCLTINAII) form a helical membrane-spanning segment. The 124-residue stretch at 2288–2411 (YMYVIAVETG…GDGETERLAR (124 aa)) folds into the PLAT domain. 10 helical membrane-spanning segments follow: residues 2453–2473 (DYSVSIIFSLVVVSMISITIL), 2496–2516 (IAFGVGFGVLITFLNSLHILL), 2557–2577 (IIVFPVLMGLIYISGAGMSLM), 2592–2612 (LILWAVVFEPIKGLIWAFLIL), 2672–2692 (LFITIRDMLCFFASLYIMVML), 2945–2965 (MLYIFFSVLIFVKEIVFYLYG), 2994–3014 (WNFMDLIVGALAVASVLAYTI), 3043–3063 (WEIVFSYCLAGAVFFTSCKMI), 3089–3109 (FGIAFLFFSMTFNSVLYAVLG), and 3144–3164 (FAFVVIMLYMIAGSKLVLQLY).

This sequence belongs to the polycystin family. Interacts (via PLAT domain) with atp-2 (via N-terminus) and with kin-10 (via C-terminus). Interacts (via C-terminus) with isoform a of stam-1/pqn-19 (via C-terminus). Autoproteolytically processed at the GPS region of the GAIN-B domain; this cleavage modulates receptor activity. In terms of tissue distribution, exclusively expressed in a subset of three categories of adult male sensory neurons: ray neurons, hook neurons and head cephalic (CEM) neurons.

The protein localises to the membrane. It is found in the cell projection. The protein resides in the cilium. In terms of biological role, required for two aspects of male mating behavior: response to hermaphrodite contact and vulva location. Acts in the same pathway as pkd-2 and atp-2 in response behavior. May be required for ciliary targeting of pkd-2. This chain is Location of vulva defective 1 (lov-1), found in Caenorhabditis elegans.